Consider the following 33-residue polypeptide: Tail virion protein G9P (33 aa).

A helical membrane pass occupies residues 5–25 (VGLFIGAYIMGFALFYGIGFF).

The protein belongs to the inovirus G9P protein family.

Its subcellular location is the virion. The protein resides in the host membrane. In terms of biological role, may initiate with G7P the virion concomitant assembly-budding process, by interacting with the packaging signal of the viral genome. The assembly-budding takes place at the host inner membrane. In turn, G7P and G9P are present at the end of the filamentous virion that emerges first from the bacterial host. This Escherichia coli (Bacteriophage I2-2) protein is Tail virion protein G9P (IX).